A 232-amino-acid chain; its full sequence is tRNA (guanine-N(7)-)-methyltransferase (232 aa).

The S-adenosyl-L-methionine site is built by glutamate 63, glutamate 88, aspartate 115, and aspartate 137. Aspartate 137 is a catalytic residue. Substrate-binding positions include lysine 141, aspartate 173, and 211–214; that span reads TRYE.

This sequence belongs to the class I-like SAM-binding methyltransferase superfamily. TrmB family.

The enzyme catalyses guanosine(46) in tRNA + S-adenosyl-L-methionine = N(7)-methylguanosine(46) in tRNA + S-adenosyl-L-homocysteine. Its pathway is tRNA modification; N(7)-methylguanine-tRNA biosynthesis. In terms of biological role, catalyzes the formation of N(7)-methylguanine at position 46 (m7G46) in tRNA. This chain is tRNA (guanine-N(7)-)-methyltransferase, found in Chelativorans sp. (strain BNC1).